Reading from the N-terminus, the 227-residue chain is Cytochrome c oxidase subunit 2 (227 aa).

Topologically, residues 1–14 (MAYPFQLGLQDATS) are mitochondrial intermembrane. The chain crosses the membrane as a helical span at residues 15–45 (PIMEELLHFHDHTLMIVFLISSLILYIISLM). At 46–59 (LTTKLTHTSTMDAQ) the chain is on the mitochondrial matrix side. Residues 60–87 (EVETVWTILPAIILILIALPSLRILYMM) form a helical membrane-spanning segment. The Mitochondrial intermembrane segment spans residues 88–227 (DEINNPSLTV…YFETWSALMV (140 aa)). Positions 161, 196, 198, 200, 204, and 207 each coordinate Cu cation. Residue Glu198 participates in Mg(2+) binding. A Phosphotyrosine modification is found at Tyr218.

This sequence belongs to the cytochrome c oxidase subunit 2 family. In terms of assembly, component of the cytochrome c oxidase (complex IV, CIV), a multisubunit enzyme composed of 14 subunits. The complex is composed of a catalytic core of 3 subunits MT-CO1, MT-CO2 and MT-CO3, encoded in the mitochondrial DNA, and 11 supernumerary subunits COX4I, COX5A, COX5B, COX6A, COX6B, COX6C, COX7A, COX7B, COX7C, COX8 and NDUFA4, which are encoded in the nuclear genome. The complex exists as a monomer or a dimer and forms supercomplexes (SCs) in the inner mitochondrial membrane with NADH-ubiquinone oxidoreductase (complex I, CI) and ubiquinol-cytochrome c oxidoreductase (cytochrome b-c1 complex, complex III, CIII), resulting in different assemblies (supercomplex SCI(1)III(2)IV(1) and megacomplex MCI(2)III(2)IV(2)). Found in a complex with TMEM177, COA6, COX18, COX20, SCO1 and SCO2. Interacts with TMEM177 in a COX20-dependent manner. Interacts with COX20. Interacts with COX16. Cu cation is required as a cofactor.

It localises to the mitochondrion inner membrane. The catalysed reaction is 4 Fe(II)-[cytochrome c] + O2 + 8 H(+)(in) = 4 Fe(III)-[cytochrome c] + 2 H2O + 4 H(+)(out). Component of the cytochrome c oxidase, the last enzyme in the mitochondrial electron transport chain which drives oxidative phosphorylation. The respiratory chain contains 3 multisubunit complexes succinate dehydrogenase (complex II, CII), ubiquinol-cytochrome c oxidoreductase (cytochrome b-c1 complex, complex III, CIII) and cytochrome c oxidase (complex IV, CIV), that cooperate to transfer electrons derived from NADH and succinate to molecular oxygen, creating an electrochemical gradient over the inner membrane that drives transmembrane transport and the ATP synthase. Cytochrome c oxidase is the component of the respiratory chain that catalyzes the reduction of oxygen to water. Electrons originating from reduced cytochrome c in the intermembrane space (IMS) are transferred via the dinuclear copper A center (CU(A)) of subunit 2 and heme A of subunit 1 to the active site in subunit 1, a binuclear center (BNC) formed by heme A3 and copper B (CU(B)). The BNC reduces molecular oxygen to 2 water molecules using 4 electrons from cytochrome c in the IMS and 4 protons from the mitochondrial matrix. In Canis simensis (Ethiopian wolf), this protein is Cytochrome c oxidase subunit 2 (MT-CO2).